A 195-amino-acid polypeptide reads, in one-letter code: Apoptosis-associated speck-like protein containing a CARD (195 aa).

The Pyrin domain occupies 1 to 91 (MGCTRDAILD…AEQLQETMSK (91 aa)). Glycyl lysine isopeptide (Lys-Gly) (interchain with G-Cter in ubiquitin) cross-links involve residues Lys55 and Lys174. A CARD domain is found at 107 to 195 (TAKPGLHFVD…PYLVDDLEQS (89 aa)). Ser195 is subject to Phosphoserine.

Self-associates; enforced oligomerization induces apoptosis, NF-kappa-B regulation and interleukin-1 beta secretion. Homooligomers can form disk-like particles of approximately 12 nm diameter and approximately 1 nm height. Component of several inflammasomes containing one pattern recognition receptor/sensor, such as NLRP1, NLRP2, NLRP3, NLRP6, NLRC4, AIM2, MEFV or NOD2, and probably NLRC4 or NLRP12. Major component of the ASC pyroptosome, a 1-2 um supramolecular assembly (one per macrophage cell) which consists of oligomerized PYCARD dimers and CASP1. Interacts with CASP1 (precursor form); the interaction induces activation of CASP1 leading to the processing of interleukin-1 beta; PYCARD competes with RIPK2 for binding to CASP1. Interacts with NLRP3; the interaction requires the homooligomerization of NLRP3. Interacts with NLRP2, NLRC4, MEFV, CARD16, AIM2, NOD2, RIGI, RIPK2, PYDC1, PYDC2, NLRP10, CASP8, CHUK, IKBKB and BAX. Component of the AIM2 PANoptosome complex, a multiprotein complex that drives inflammatory cell death (PANoptosis). Post-translationally, phosphorylated. 'Lys-63'-linked polyubiquitination by TRAF3 is critical for speck formation and inflammasome activation. 'Lys-63'-linked deubiquitinated by USP50; a crucial step for NLRP3-mediated inflammasome activation. 'Lys-63'-linked polyubiquitination by PELI1 is also critical for speck formation and inflammasome activation. Deubiquitinated by USP3 that cleaves 'Lys-48'-linked ubiquitin chains and strengthens its stability by blocking proteasomal degradation.

Its subcellular location is the cytoplasm. The protein localises to the inflammasome. It localises to the endoplasmic reticulum. The protein resides in the mitochondrion. It is found in the nucleus. Functionally, functions as a key mediator in apoptosis and inflammation. Promotes caspase-mediated apoptosis involving predominantly caspase-8 and also caspase-9 in a probable cell type-specific manner. Involved in activation of the mitochondrial apoptotic pathway, promotes caspase-8-dependent proteolytic maturation of BID independently of FADD in certain cell types and also mediates mitochondrial translocation of BAX and activates BAX-dependent apoptosis coupled to activation of caspase-9, -2 and -3. Involved in innate immune response by acting as an integral adapter in the assembly of various inflammasomes (NLRP2, NLRP3, NLRP6 and AIM2) which recruit and activate caspase-1 leading to processing and secretion of pro-inflammatory cytokines. Caspase-1-dependent inflammation leads to macrophage pyroptosis, a form of cell death. The function as activating adapter in different types of inflammasomes is mediated by the pyrin and CARD domains and their homotypic interactions. Clustered PYCARD nucleates the formation of caspase-1 filaments through the interaction of their respective CARD domains, acting as a platform for of caspase-1 polymerization. In the NLRC4 inflammasomes seems not be required but facilitates the processing of procaspase-1. In cooperation with NOD2 involved in an inflammasome activated by bacterial muramyl dipeptide leading to caspase-1 activation. May be involved in RIGI-triggered pro-inflammatory responses and inflammasome activation. In collaboration with AIM2 which detects cytosolic double-stranded DNA may also be involved in a caspase-1-independent cell death that involves caspase-8. In adaptive immunity may be involved in maturation of dendritic cells to stimulate T-cell immunity and in cytoskeletal rearrangements coupled to chemotaxis and antigen uptake may be involved in post-transcriptional regulation of the guanine nucleotide exchange factor DOCK2; the latter function is proposed to involve the nuclear form. Also involved in transcriptional activation of cytokines and chemokines independent of the inflammasome; this function may involve AP-1, NF-kappa-B, MAPK and caspase-8 signaling pathways. For regulation of NF-kappa-B activating and inhibiting functions have been reported. Modulates NF-kappa-B induction at the level of the IKK complex by inhibiting kinase activity of CHUK and IKBK. Proposed to compete with RIPK2 for association with CASP1 thereby down-regulating CASP1-mediated RIPK2-dependent NF-kappa-B activation and activating interleukin-1 beta processing. Modulates host resistance to DNA virus infection, probably by inducing the cleavage of and inactivating CGAS in presence of cytoplasmic double-stranded DNA. In Bos taurus (Bovine), this protein is Apoptosis-associated speck-like protein containing a CARD (PYCARD).